The chain runs to 431 residues: NADH-quinone oxidoreductase subunit D 2 (431 aa).

The interval Met1–Ala27 is disordered.

Belongs to the complex I 49 kDa subunit family. In terms of assembly, NDH-1 is composed of 14 different subunits. Subunits NuoB, C, D, E, F, and G constitute the peripheral sector of the complex.

It is found in the cell inner membrane. It catalyses the reaction a quinone + NADH + 5 H(+)(in) = a quinol + NAD(+) + 4 H(+)(out). In terms of biological role, NDH-1 shuttles electrons from NADH, via FMN and iron-sulfur (Fe-S) centers, to quinones in the respiratory chain. The immediate electron acceptor for the enzyme in this species is believed to be ubiquinone. Couples the redox reaction to proton translocation (for every two electrons transferred, four hydrogen ions are translocated across the cytoplasmic membrane), and thus conserves the redox energy in a proton gradient. This is NADH-quinone oxidoreductase subunit D 2 from Anaeromyxobacter sp. (strain Fw109-5).